The chain runs to 267 residues: Thiazole synthase (267 aa).

The active-site Schiff-base intermediate with DXP is lysine 110. 1-deoxy-D-xylulose 5-phosphate contacts are provided by residues glycine 171, alanine 197–glycine 198, and asparagine 219–threonine 220.

Belongs to the ThiG family. As to quaternary structure, homotetramer. Forms heterodimers with either ThiH or ThiS.

The protein localises to the cytoplasm. The enzyme catalyses [ThiS sulfur-carrier protein]-C-terminal-Gly-aminoethanethioate + 2-iminoacetate + 1-deoxy-D-xylulose 5-phosphate = [ThiS sulfur-carrier protein]-C-terminal Gly-Gly + 2-[(2R,5Z)-2-carboxy-4-methylthiazol-5(2H)-ylidene]ethyl phosphate + 2 H2O + H(+). It functions in the pathway cofactor biosynthesis; thiamine diphosphate biosynthesis. In terms of biological role, catalyzes the rearrangement of 1-deoxy-D-xylulose 5-phosphate (DXP) to produce the thiazole phosphate moiety of thiamine. Sulfur is provided by the thiocarboxylate moiety of the carrier protein ThiS. In vitro, sulfur can be provided by H(2)S. The polypeptide is Thiazole synthase (Maricaulis maris (strain MCS10) (Caulobacter maris)).